The primary structure comprises 303 residues: 1D-myo-inositol 2-acetamido-2-deoxy-alpha-D-glucopyranoside deacetylase (303 aa).

Zn(2+) contacts are provided by H15, D18, and H157.

The protein belongs to the MshB deacetylase family. Zn(2+) is required as a cofactor.

The enzyme catalyses 1D-myo-inositol 2-acetamido-2-deoxy-alpha-D-glucopyranoside + H2O = 1D-myo-inositol 2-amino-2-deoxy-alpha-D-glucopyranoside + acetate. Catalyzes the deacetylation of 1D-myo-inositol 2-acetamido-2-deoxy-alpha-D-glucopyranoside (GlcNAc-Ins) in the mycothiol biosynthesis pathway. This is 1D-myo-inositol 2-acetamido-2-deoxy-alpha-D-glucopyranoside deacetylase from Kribbella flavida (strain DSM 17836 / JCM 10339 / NBRC 14399).